The sequence spans 323 residues: Cytochrome c biogenesis protein CcsA (323 aa).

Helical transmembrane passes span 17–37 (VVSI…IVGF), 44–64 (GMII…FFSG), 68–88 (FSDL…FYMV), 98–118 (LSTI…SGLL), 143–163 (MILG…ILVI), 229–249 (IISL…VWAN), 262–279 (ETWA…LHSR), and 291–311 (IVAS…NLLG).

The protein belongs to the CcmF/CycK/Ccl1/NrfE/CcsA family. In terms of assembly, may interact with Ccs1.

It localises to the plastid. It is found in the chloroplast thylakoid membrane. In terms of biological role, required during biogenesis of c-type cytochromes (cytochrome c6 and cytochrome f) at the step of heme attachment. This is Cytochrome c biogenesis protein CcsA from Lotus japonicus (Lotus corniculatus var. japonicus).